The chain runs to 306 residues: Agmatinase (306 aa).

Residues histidine 126, aspartate 149, histidine 151, aspartate 153, aspartate 230, and aspartate 232 each coordinate Mn(2+).

The protein belongs to the arginase family. Agmatinase subfamily. Mn(2+) is required as a cofactor.

The enzyme catalyses agmatine + H2O = urea + putrescine. Its pathway is amine and polyamine biosynthesis; putrescine biosynthesis via agmatine pathway; putrescine from agmatine: step 1/1. Catalyzes the formation of putrescine from agmatine. In Shigella boydii serotype 18 (strain CDC 3083-94 / BS512), this protein is Agmatinase.